We begin with the raw amino-acid sequence, 104 residues long: Large ribosomal subunit protein bL21 (104 aa).

This sequence belongs to the bacterial ribosomal protein bL21 family. Part of the 50S ribosomal subunit. Contacts protein L20.

This protein binds to 23S rRNA in the presence of protein L20. The chain is Large ribosomal subunit protein bL21 from Clostridium tetani (strain Massachusetts / E88).